The following is an 81-amino-acid chain: Protease inhibitor 1 (81 aa).

The N-terminal stretch at 1–24 (MSSGGLLLLLGLLTLWAELTPVSG) is a signal peptide. One can recognise a BPTI/Kunitz inhibitor domain in the interval 29–79 (CELPAETGPCKARIRAFYYNPHSHKCLEFTYGGCKGNANNFKTIDECNRTC). Cystine bridges form between cysteine 29/cysteine 79, cysteine 38/cysteine 62, and cysteine 54/cysteine 75.

As to expression, expressed by the venom gland.

It localises to the secreted. In terms of biological role, snake venom serine protease inhibitor. The protein is Protease inhibitor 1 of Walterinnesia aegyptia (Desert black snake).